Here is a 228-residue protein sequence, read N- to C-terminus: Spore wall protein 12 (228 aa).

An N-linked (GlcNAc...) asparagine glycan is attached at Asn-117.

It belongs to the SWP12 family.

The protein resides in the spore wall. This is Spore wall protein 12 (SWP12) from Nosema bombycis (strain CQ1 / CVCC 102059) (Microsporidian parasite).